The primary structure comprises 436 residues: GTPase Der (436 aa).

EngA-type G domains follow at residues 4-167 and 175-351; these read PTIA…PNEE and IKFS…QSQN. GTP-binding positions include 10–17, 57–61, 119–122, 181–188, 229–233, and 294–297; these read GRPNVGKS, DTGGI, NKVD, DTAGM, and NKWD. The KH-like domain occupies 352–436; it reads TRIPSAVLND…PIHLIARKRK (85 aa).

It belongs to the TRAFAC class TrmE-Era-EngA-EngB-Septin-like GTPase superfamily. EngA (Der) GTPase family. In terms of assembly, associates with the 50S ribosomal subunit.

Functionally, GTPase that plays an essential role in the late steps of ribosome biogenesis. The chain is GTPase Der from Streptococcus sanguinis (strain SK36).